The chain runs to 1040 residues: Vacuolar membrane protease (1040 aa).

The Cytoplasmic portion of the chain corresponds to 1 to 9 (MINPISFRP). Residues 10–30 (GPVTFWTTLIYLALLIPIVII) form a helical membrane-spanning segment. Residues 31–405 (NEEPPAAPKT…SFVLFGLRGM (375 aa)) lie on the Vacuolar side of the membrane. N-linked (GlcNAc...) asparagine glycosylation is found at asparagine 48, asparagine 117, asparagine 120, and asparagine 129. The Zn(2+) site is built by histidine 186 and aspartate 198. The active-site Proton acceptor is the glutamate 232. Glutamate 233, glutamate 258, and histidine 331 together coordinate Zn(2+). A helical membrane pass occupies residues 406–426 (FAWSLTLLIATPLILVGITWL). Over 427–436 (LRNLDKDYFF) the chain is Cytoplasmic. Residues 437–456 (TSTVKTKEHPEYEAVPIGGW) form a helical membrane-spanning segment. Over 457-462 (KGFFRW) the chain is Vacuolar. Residues 463–483 (AMMVSIFYFSFWMIMRGANFV) form a helical membrane-spanning segment. Residues 484 to 490 (RPSALHR) lie on the Cytoplasmic side of the membrane. Residues 491-511 (GYANLWLFVFGWIVLVAVTAL) traverse the membrane as a helical segment. Over 512-521 (EDRRRIAAGY) the chain is Vacuolar. A helical membrane pass occupies residues 522-542 (IFVFLESAIFLSCLISFVELL). Over 543-715 (ALPRKSAYAL…YEHEQDWSGH (173 aa)) the chain is Cytoplasmic. A disordered region spans residues 563 to 680 (HSGYQGYRDS…NGTNDRGRTT (118 aa)). Low complexity-rich tracts occupy residues 577–594 (SSGARAESSASAGSPSSP) and 616–626 (APSVAAHSSQP). A compositionally biased stretch (polar residues) spans 636–647 (GRSTSAPIPSTT). Residues 650–661 (DEDESEDDDDEA) show a composition bias toward acidic residues. A helical membrane pass occupies residues 716–736 (LPSWAWFFQFLLLGPFMIILA). The Vacuolar portion of the chain corresponds to 737-758 (AQTGLMLTDAVYQTGSDGSKLF). The chain crosses the membrane as a helical span at residues 759 to 779 (TPYLMIFFFTLLLILPLTPFI). Residues 780 to 785 (HRVTHH) lie on the Cytoplasmic side of the membrane. Residues 786-806 (IPVFLLVVFIVTLTYNLIAFP) traverse the membrane as a helical segment. Topologically, residues 807 to 1040 (FSANNRYKAF…VEGRKAFKIV (234 aa)) are vacuolar. An N-linked (GlcNAc...) asparagine glycan is attached at asparagine 900.

It belongs to the peptidase M28 family. Requires Zn(2+) as cofactor.

It is found in the vacuole membrane. In terms of biological role, may be involved in vacuolar sorting and osmoregulation. The chain is Vacuolar membrane protease from Sordaria macrospora (strain ATCC MYA-333 / DSM 997 / K(L3346) / K-hell).